Reading from the N-terminus, the 518-residue chain is Nuclear receptor ROR-gamma (518 aa).

The interval 1 to 30 (MDRAPQRQHRASRELLAAKKTHTSQIEVIP) is modulating. NR C4-type zinc fingers lie at residues 31–51 (CKIC…CEGC) and 67–91 (CTRQ…LQKC). The nuclear receptor DNA-binding region spans 31–96 (CKICGDKSSG…RLQKCLALGM (66 aa)). 2 disordered regions span residues 105-183 (RMSK…SGSG) and 238-258 (HPGL…SFRS). A compositionally biased stretch (basic and acidic residues) spans 109-118 (KQRDSLHAEV). A compositionally biased stretch (low complexity) spans 119-130 (QKQLQQRQQQQQ). The NR LBD domain occupies 269-508 (EIEHLVQSVC…PPLYKELFST (240 aa)). The AF-2 motif lies at 501-506 (LYKELF).

This sequence belongs to the nuclear hormone receptor family. NR1 subfamily. In terms of assembly, interacts (via AF-2 motif) with the coactivator NCOA2 (via LXXLL motif). Interacts with the corepressor NCOR1. Interacts with CRY1. Interacts (via AF-2 motif) with the coactivators NCOA1 and PPARGC1A (via LXXLL motif). Interacts (via AF-2 motif) with PROX1. Interacts with FOXP3. Interacts with NR0B2. In terms of tissue distribution, isoform 1 is widely expressed in many tissues, including liver and adipose, and highly expressed in skeletal muscle. Isoform 2 is primarily expressed in immature thymocytes.

It localises to the nucleus. Functionally, nuclear receptor that binds DNA as a monomer to ROR response elements (RORE) containing a single core motif half-site 5'-AGGTCA-3' preceded by a short A-T-rich sequence. Key regulator of cellular differentiation, immunity, peripheral circadian rhythm as well as lipid, steroid, xenobiotics and glucose metabolism. Considered to have intrinsic transcriptional activity, have some natural ligands like oxysterols that act as agonists (25-hydroxycholesterol) or inverse agonists (7-oxygenated sterols), enhancing or repressing the transcriptional activity, respectively. Recruits distinct combinations of cofactors to target gene regulatory regions to modulate their transcriptional expression, depending on the tissue, time and promoter contexts. Regulates the circadian expression of clock genes such as CRY1, BMAL1 and NR1D1 in peripheral tissues and in a tissue-selective manner. Competes with NR1D1 for binding to their shared DNA response element on some clock genes such as BMAL1, CRY1 and NR1D1 itself, resulting in NR1D1-mediated repression or RORC-mediated activation of the expression, leading to the circadian pattern of clock genes expression. Therefore influences the period length and stability of the clock. Involved in the regulation of the rhythmic expression of genes involved in glucose and lipid metabolism, including PLIN2 and AVPR1A. Negative regulator of adipocyte differentiation through the regulation of early phase genes expression, such as MMP3. Controls adipogenesis as well as adipocyte size and modulates insulin sensitivity in obesity. In liver, has specific and redundant functions with RORA as positive or negative modulator of expression of genes encoding phase I and Phase II proteins involved in the metabolism of lipids, steroids and xenobiotics, such as SULT1E1. Also plays a role in the regulation of hepatocyte glucose metabolism through the regulation of G6PC1 and PCK1. Regulates the rhythmic expression of PROX1 and promotes its nuclear localization. Plays an indispensable role in the induction of IFN-gamma dependent anti-mycobacterial systemic immunity. In terms of biological role, essential for thymopoiesis and the development of several secondary lymphoid tissues, including lymph nodes and Peyer's patches. Required for the generation of LTi (lymphoid tissue inducer) cells. Regulates thymocyte survival through DNA-binding on ROREs of target gene promoter regions and recruitment of coactivaros via the AF-2. Also plays a key role, downstream of IL6 and TGFB and synergistically with RORA, for lineage specification of uncommitted CD4(+) T-helper (T(H)) cells into T(H)17 cells, antagonizing the T(H)1 program. Probably regulates IL17 and IL17F expression on T(H) by binding to the essential enhancer conserved non-coding sequence 2 (CNS2) in the IL17-IL17F locus. May also play a role in the pre-TCR activation cascade leading to the maturation of alpha/beta T-cells and may participate in the regulation of DNA accessibility in the TCR-J(alpha) locus. The protein is Nuclear receptor ROR-gamma (RORC) of Homo sapiens (Human).